Consider the following 195-residue polypeptide: HTH-type transcriptional regulator BetI (195 aa).

The HTH tetR-type domain maps to 8-68 (SIRRRQLIDA…ATMRDITSQL (61 aa)). Residues 31 to 50 (TIAQIARRAGVSTGIISHYF) constitute a DNA-binding region (H-T-H motif).

Its pathway is amine and polyamine biosynthesis; betaine biosynthesis via choline pathway [regulation]. Repressor involved in the biosynthesis of the osmoprotectant glycine betaine. It represses transcription of the choline transporter BetT and the genes of BetAB involved in the synthesis of glycine betaine. The sequence is that of HTH-type transcriptional regulator BetI from Escherichia coli O8 (strain IAI1).